The primary structure comprises 490 residues: Bifunctional protein HldE (490 aa).

The ribokinase stretch occupies residues 1 to 330; sequence MFSFDALLQA…RRILPHASLA (330 aa). Residue 205–208 coordinates ATP; that stretch reads NRKE. The active site involves Asp275. The interval 358 to 490 is cytidylyltransferase; that stretch reads FTNGCFDILH…LVARAREGQS (133 aa).

This sequence in the N-terminal section; belongs to the carbohydrate kinase PfkB family. The protein in the C-terminal section; belongs to the cytidylyltransferase family. As to quaternary structure, homodimer.

It carries out the reaction D-glycero-beta-D-manno-heptose 7-phosphate + ATP = D-glycero-beta-D-manno-heptose 1,7-bisphosphate + ADP + H(+). It catalyses the reaction D-glycero-beta-D-manno-heptose 1-phosphate + ATP + H(+) = ADP-D-glycero-beta-D-manno-heptose + diphosphate. The protein operates within nucleotide-sugar biosynthesis; ADP-L-glycero-beta-D-manno-heptose biosynthesis; ADP-L-glycero-beta-D-manno-heptose from D-glycero-beta-D-manno-heptose 7-phosphate: step 1/4. It participates in nucleotide-sugar biosynthesis; ADP-L-glycero-beta-D-manno-heptose biosynthesis; ADP-L-glycero-beta-D-manno-heptose from D-glycero-beta-D-manno-heptose 7-phosphate: step 3/4. Its function is as follows. Catalyzes the phosphorylation of D-glycero-D-manno-heptose 7-phosphate at the C-1 position to selectively form D-glycero-beta-D-manno-heptose-1,7-bisphosphate. In terms of biological role, catalyzes the ADP transfer from ATP to D-glycero-beta-D-manno-heptose 1-phosphate, yielding ADP-D-glycero-beta-D-manno-heptose. The sequence is that of Bifunctional protein HldE from Rhodopseudomonas palustris (strain ATCC BAA-98 / CGA009).